Consider the following 290-residue polypeptide: MAKKPKQLRNKPRKSFSTQTFTVVVLVLFVILILVGLGIFSLPSTNKTSSMPMDLTTIVQTIQERESFGDEEDGNGDRWLEVISWEPRAFVYHNFLTNEECEHLISLAKPSMMKSKVVDVKTGKSIDSRVRTSSGTFLNRGHDEIVEEIENRISDFTFIPPENGEGLQVLHYEVGQRYEPHHDYFFDEFNVRKGGQRIATVLMYLSDVDEGGETVFPAAKGNVSDVPWWDELSQCGKEGLSVLPKKRDALLFWSMKPDASLDPSSLHGGCPVIKGNKWSSTKWFHVHEYN.

Topologically, residues 1–19 are cytoplasmic; sequence MAKKPKQLRNKPRKSFSTQ. A helical; Signal-anchor for type II membrane protein membrane pass occupies residues 20–40; sequence TFTVVVLVLFVILILVGLGIF. At 41–290 the chain is on the lumenal side; sequence SLPSTNKTSS…TKWFHVHEYN (250 aa). Asn-46 carries an N-linked (GlcNAc...) asparagine glycan. Positions 163–286 constitute a Fe2OG dioxygenase domain; the sequence is NGEGLQVLHY…KWSSTKWFHV (124 aa). Residues His-181 and Asp-183 each contribute to the Fe cation site. The N-linked (GlcNAc...) asparagine glycan is linked to Asn-222. Fe cation is bound at residue His-267. Position 277 (Lys-277) interacts with 2-oxoglutarate.

Belongs to the P4HA family. The cofactor is Fe(2+). Requires L-ascorbate as cofactor.

The protein localises to the endoplasmic reticulum membrane. It carries out the reaction L-prolyl-[collagen] + 2-oxoglutarate + O2 = trans-4-hydroxy-L-prolyl-[collagen] + succinate + CO2. Its function is as follows. Catalyzes the post-translational formation of 4-hydroxyproline in -Xaa-Pro-Gly- sequences in proline-rich peptide sequences of plant glycoproteins and other proteins. Hydroxyprolines are important constituent of many plant cell wall glycoproteins such as extensins, hydroxyproline-rich glycoproteins, lectins and arabinogalactan proteins. This chain is Probable prolyl 4-hydroxylase 8, found in Arabidopsis thaliana (Mouse-ear cress).